A 202-amino-acid polypeptide reads, in one-letter code: Putative zinc finger protein ZK686.5 (202 aa).

The disordered stretch occupies residues 43–63 (RKNVDNTSTRKPYSYKDRKRK). 3 consecutive C2H2-type zinc fingers follow at residues 110–133 (TYCE…GKVH), 138–160 (IECH…MKTH), and 169–192 (VQCE…DVSH).

The protein localises to the nucleus. The chain is Putative zinc finger protein ZK686.5 from Caenorhabditis elegans.